The primary structure comprises 421 residues: Protein ECERIFERUM 2 (421 aa).

An N-acetylmethionine modification is found at Met-1.

Belongs to the plant acyltransferase family. As to expression, expressed at high levels in the epidermis of stems and young siliques. Expressed in flowers.

The protein resides in the endoplasmic reticulum. It is found in the nucleus. Involved in biosynthesis of the epicuticular wax. Plays a role in very-long-chain fatty acid (VLCFA) biosynthesis and is required for C28 fatty acid elongation in stem. Despite its classification as a BAHD acyltransferase based on sequence homology, CER2 does not seem to share the catalytic mechanism of the members of the BAHD family. In Arabidopsis thaliana (Mouse-ear cress), this protein is Protein ECERIFERUM 2 (CER2).